The primary structure comprises 238 residues: Protein LicA homolog (238 aa).

It belongs to the peptidase S49 family.

In Mycoplasma capricolum subsp. capricolum (strain California kid / ATCC 27343 / NCTC 10154), this protein is Protein LicA homolog (licA).